Consider the following 762-residue polypeptide: 5-methyltetrahydropteroyltriglutamate--homocysteine methyltransferase (762 aa).

5-methyltetrahydropteroyltri-L-glutamate-binding positions include 17–20 and Lys-111; that span reads REWK. L-homocysteine-binding positions include 435 to 437 and Glu-488; that span reads IGS. Residues 435 to 437 and Glu-488 contribute to the L-methionine site; that span reads IGS. Residues 519-520 and Trp-565 contribute to the 5-methyltetrahydropteroyltri-L-glutamate site; that span reads RC. Residue Asp-603 coordinates L-homocysteine. L-methionine is bound at residue Asp-603. Glu-609 provides a ligand contact to 5-methyltetrahydropteroyltri-L-glutamate. The Zn(2+) site is built by His-645, Cys-647, and Glu-669. The active-site Proton donor is His-698. Cys-730 contacts Zn(2+).

This sequence belongs to the vitamin-B12 independent methionine synthase family. The cofactor is Zn(2+).

The catalysed reaction is 5-methyltetrahydropteroyltri-L-glutamate + L-homocysteine = tetrahydropteroyltri-L-glutamate + L-methionine. It participates in amino-acid biosynthesis; L-methionine biosynthesis via de novo pathway; L-methionine from L-homocysteine (MetE route): step 1/1. Its function is as follows. Catalyzes the transfer of a methyl group from 5-methyltetrahydrofolate to homocysteine resulting in methionine formation. This chain is 5-methyltetrahydropteroyltriglutamate--homocysteine methyltransferase, found in Bacillus anthracis (strain A0248).